We begin with the raw amino-acid sequence, 525 residues long: uncharacterized protein (525 aa).

Helical transmembrane passes span 36 to 56 (AVAA…TLAL) and 61 to 81 (ALPA…AAAI). The 56-residue stretch at 173-228 (SAVDIRLERTSADGPQFAHIYCEMTPLRDAEGNLLAIVAQSRDVSEEARLQAEAAA) folds into the PAC domain. Positions 246 to 466 (AVSHELRTPL…VIVVTIPSDA (221 aa)) constitute a Histidine kinase domain. His249 bears the Phosphohistidine; by autocatalysis mark. The segment at 506–525 (LHTGEIGREGGHGAAQAKTA) is disordered.

Its subcellular location is the cell membrane. It catalyses the reaction ATP + protein L-histidine = ADP + protein N-phospho-L-histidine.. This is an uncharacterized protein from Rhizobium meliloti (strain 1021) (Ensifer meliloti).